Consider the following 103-residue polypeptide: 11.2 kDa protein (103 aa).

This is 11.2 kDa protein from Pseudomonas phage Pf1 (Bacteriophage Pf1).